Consider the following 333-residue polypeptide: Flap endonuclease 1 (333 aa).

An N-domain region spans residues 1–99 (MGVAIRDILA…ETINERREHR (99 aa)). Mg(2+) is bound by residues Asp-28, Asp-81, Glu-153, Glu-155, Asp-174, Asp-176, and Asp-235. The segment at 117–255 (EAYKQASASA…KTALKIVRNG (139 aa)) is I-domain. The tract at residues 325–333 (TQKTLDAWF) is interaction with PCNA.

This sequence belongs to the XPG/RAD2 endonuclease family. FEN1 subfamily. Interacts with PCNA. PCNA stimulates the nuclease activity without altering cleavage specificity. Mg(2+) serves as cofactor.

Its function is as follows. Structure-specific nuclease with 5'-flap endonuclease and 5'-3' exonuclease activities involved in DNA replication and repair. During DNA replication, cleaves the 5'-overhanging flap structure that is generated by displacement synthesis when DNA polymerase encounters the 5'-end of a downstream Okazaki fragment. Binds the unpaired 3'-DNA end and kinks the DNA to facilitate 5' cleavage specificity. Cleaves one nucleotide into the double-stranded DNA from the junction in flap DNA, leaving a nick for ligation. Also involved in the base excision repair (BER) pathway. Acts as a genome stabilization factor that prevents flaps from equilibrating into structures that lead to duplications and deletions. Also possesses 5'-3' exonuclease activity on nicked or gapped double-stranded DNA. The protein is Flap endonuclease 1 of Methanoculleus marisnigri (strain ATCC 35101 / DSM 1498 / JR1).